Consider the following 315-residue polypeptide: Protein OPG185 (315 aa).

Positions 1 to 16 (MTRLPILLLLISLVYA) are cleaved as a signal peptide. The Ig-like V-type domain occupies 17–121 (TPFPQTSKKI…NDTDKVDYEE (105 aa)). The Virion surface segment spans residues 17–279 (TPFPQTSKKI…SNYKTKDFVE (263 aa)). A disulfide bridge connects residues C34 and C103. Residues N37, N69, N112, and N161 are each glycosylated (N-linked (GlcNAc...) asparagine; by host). Residues 191-202 (SINTVSASSGES) are compositionally biased toward polar residues. Residues 191–213 (SINTVSASSGESTTDETPEPITD) are disordered. A glycan (N-linked (GlcNAc...) asparagine; by host) is linked at N254. The helical transmembrane segment at 280 to 303 (IFGITALIILSAVAIFCITYYIYN) threads the bilayer. At 304–315 (KRSRKYKTENKV) the chain is on the intravirion side.

It belongs to the orthopoxvirus OPG185 family. Heterodimerizes with OPG040. The heterodimer OPG185-OPG040 interacts with components of the entry fusion complex OPG143 and OPG094. Heterodimer with C3/VPC protein; disulfide-linked. Glycosylated; contains phosphate and sulfate-substituted glycans. O-glycosylation is required for hemagglutination and hemadsorption activities of infected cell membranes.

The protein localises to the virion membrane. Its subcellular location is the host membrane. Prevents cell to cell fusion by interacting with and directing the viral OPG040 protein on the host plasma membrane. The OPG185-OPG040 complex associates with components of the entry fusion complex (EFC) presumably to avoid superinfection and syncytium formation. Via its interaction with C3/VCP protein, protects the infected cell and probably also the extracellular enveloped virus from complement attack. This is Protein OPG185 (OPG185) from Homo sapiens (Human).